Here is a 373-residue protein sequence, read N- to C-terminus: 3-dehydroquinate synthase (373 aa).

NAD(+) is bound by residues 107–111 (GVIGD), 131–132 (TS), Lys-144, and Lys-153. Residues Glu-186, His-249, and His-267 each contribute to the Zn(2+) site.

Belongs to the sugar phosphate cyclases superfamily. Dehydroquinate synthase family. The cofactor is Co(2+). Requires Zn(2+) as cofactor. It depends on NAD(+) as a cofactor.

Its subcellular location is the cytoplasm. It catalyses the reaction 7-phospho-2-dehydro-3-deoxy-D-arabino-heptonate = 3-dehydroquinate + phosphate. The protein operates within metabolic intermediate biosynthesis; chorismate biosynthesis; chorismate from D-erythrose 4-phosphate and phosphoenolpyruvate: step 2/7. Functionally, catalyzes the conversion of 3-deoxy-D-arabino-heptulosonate 7-phosphate (DAHP) to dehydroquinate (DHQ). In Ruegeria sp. (strain TM1040) (Silicibacter sp.), this protein is 3-dehydroquinate synthase.